Reading from the N-terminus, the 569-residue chain is Arginine--tRNA ligase (569 aa).

A 'HIGH' region motif is present at residues 128–138; the sequence is ANPTGPLHVGH.

It belongs to the class-I aminoacyl-tRNA synthetase family. Monomer.

It localises to the cytoplasm. It carries out the reaction tRNA(Arg) + L-arginine + ATP = L-arginyl-tRNA(Arg) + AMP + diphosphate. The protein is Arginine--tRNA ligase of Paracidovorax citrulli (strain AAC00-1) (Acidovorax citrulli).